The following is a 232-amino-acid chain: tRNA1(Val) (adenine(37)-N6)-methyltransferase (232 aa).

The protein belongs to the methyltransferase superfamily. tRNA (adenine-N(6)-)-methyltransferase family.

It is found in the cytoplasm. The enzyme catalyses adenosine(37) in tRNA1(Val) + S-adenosyl-L-methionine = N(6)-methyladenosine(37) in tRNA1(Val) + S-adenosyl-L-homocysteine + H(+). Its function is as follows. Specifically methylates the adenine in position 37 of tRNA(1)(Val) (anticodon cmo5UAC). This chain is tRNA1(Val) (adenine(37)-N6)-methyltransferase, found in Haemophilus influenzae (strain 86-028NP).